A 315-amino-acid chain; its full sequence is Tryptophan prenyltransferase ComQ (315 aa).

Residues aspartate 95 and aspartate 99 each contribute to the Mg(2+) site.

This sequence belongs to the FPP/GGPP synthase family. Mg(2+) serves as cofactor.

The protein localises to the cell membrane. The catalysed reaction is L-tryptophyl-[protein] + (2E,6E)-farnesyl diphosphate = (2S,3R)-3-farnesyl-2,3-dihydro-2,N(alpha)-cyclo-L-tryptophyl-[protein] + diphosphate. In terms of biological role, part of a major quorum-sensing system that regulates the development of genetic competence. Involved in the maturation of the competence pheromone ComX. Acts by catalyzing the transfer of a farnesyl group on the ComX pheromone. In vitro, can also catalyze the farnesylation of single tryptophan and tryptophan derivatives. In Bacillus subtilis subsp. natto (strain BEST195), this protein is Tryptophan prenyltransferase ComQ.